A 433-amino-acid chain; its full sequence is O-methyltransferase VdtC (433 aa).

Residue aspartate 284 coordinates S-adenosyl-L-methionine. Histidine 335 functions as the Proton acceptor in the catalytic mechanism.

The protein belongs to the class I-like SAM-binding methyltransferase superfamily. Cation-independent O-methyltransferase family. COMT subfamily.

The catalysed reaction is 7,9,10-trihydroxy-3-(2-oxopropyl)-1H-benzo[g]isochromen-1-one + S-adenosyl-L-methionine = 9,10-dihydroxy-7-methoxy-3-(2-oxopropyl)-1H-benzo[g]isochromen-1-one + S-adenosyl-L-homocysteine + H(+). It participates in secondary metabolite biosynthesis. Functionally, O-methyltransferase; part of the gene cluster that mediates the biosynthesis of viriditoxin, one of the 'classical' secondary metabolites produced by fungi and that has antibacterial activity. The first step is performed by the polyketide synthase VdtA which condenses one acetyl-CoA and 6 malonyl-CoA units to form the heptaketide monomer backbone of viriditoxin. The product of VdtA is then O-methylated on C7 by the O-methyltransferase VdtC. The O-methyl group is important for the stereoselective coupling of the monomers at the final step of viriditoxin biosynthesis. The short-chain dehydrogenase/reductase VdtF then acts as a stereospecific reductase converting the pyrone to dihydropyrone via the reduction of the C3-C4 double bond. The FAD-binding monooxygenase VdtE then converts the ketone group into a methyl-ester group to yield semi-viriditoxin. Finally, the laccase VdtB is involved in dimerization of 2 semi-viriditoxin molecules to yield the final viriditoxin. VdtB is responsible for the regioselective 6,6'-coupling of semi-viriditoxin, which yields (M)-viriditoxin and (P)-viriditoxin at a ratio of 1:2. The non-catalytic carboxylesterase-like protein VdtD affects the stereochemistical outcome of the coupling. The highly reducing polyketide synthase VdtX is not involved in viriditoxin synthesis, but might possibly play a role in the production of additional metabolites not identified yet. The protein is O-methyltransferase VdtC of Byssochlamys spectabilis (Paecilomyces variotii).